A 372-amino-acid chain; its full sequence is F-box/kelch-repeat protein At4g14905 (372 aa).

In terms of domain architecture, F-box spans L34–R74. Kelch repeat units lie at residues E137 to G183, K184 to M229, and K232 to Q280.

This chain is F-box/kelch-repeat protein At4g14905, found in Arabidopsis thaliana (Mouse-ear cress).